The primary structure comprises 360 residues: MKILNLDLGYKSYPIYIGQNLLLKGELLTKHISGKQVMIVTNTTVAPLYLKKVQNLLLSFEFAQVILPDGEKYKTLDTVNCIFSALLEKRFDRSCTLIALGGGVVGDMTGFVAASYQRGVNFIQIPTTLLSQVDSSVGGKTGVNHMLGKNMIGAFHQPKCVLIDIYTLDTLDSQQYSSGMAEVIKYGLLVEYLNFFNFLQENIKDLMDRKQSLIIEMIYQSCQHKINIVAQDELEMGKRTLLNLGHTFGHAIENTLGYGTFLHGEAISVGILMATRLSQLEGYLSSKQVAKIQDLLEKANLPISIIGKINASAFMKAMLVDKKVINGNIRLILLKRLGQAFICDNYNNHLLDQVVNEFCQ.

NAD(+) contacts are provided by residues 69 to 74, 103 to 107, 127 to 128, K140, K149, and 167 to 170; these read DGEKYK, GVVGD, TT, and TLDT. Positions 182, 246, and 263 each coordinate Zn(2+).

Belongs to the sugar phosphate cyclases superfamily. Dehydroquinate synthase family. The cofactor is Co(2+). Zn(2+) serves as cofactor. It depends on NAD(+) as a cofactor.

The protein resides in the cytoplasm. It catalyses the reaction 7-phospho-2-dehydro-3-deoxy-D-arabino-heptonate = 3-dehydroquinate + phosphate. It participates in metabolic intermediate biosynthesis; chorismate biosynthesis; chorismate from D-erythrose 4-phosphate and phosphoenolpyruvate: step 2/7. In terms of biological role, catalyzes the conversion of 3-deoxy-D-arabino-heptulosonate 7-phosphate (DAHP) to dehydroquinate (DHQ). The polypeptide is 3-dehydroquinate synthase (Vesicomyosocius okutanii subsp. Calyptogena okutanii (strain HA)).